The primary structure comprises 477 residues: Tripartite motif-containing protein 72 (477 aa).

Positions 14, 17, 29, 31, 34, 37, 53, 56, 86, 89, 97, 100, 105, 108, 114, and 117 each coordinate Zn(2+). The segment at 14 to 57 (CPLCLQLFDAPVTAECGHSFCRACLGRVAGEPAADGTVLCPCCQ) adopts an RING-type zinc-finger fold. Residues 81–122 (VPQGHCEEHLDPLSIYCEQDRALVCGVCASLGSHRGHRLLPA) form a B box-type zinc finger. A coiled-coil region spans residues 135–232 (QQKLQLQEAC…EKVLEEVADK (98 aa)). S-nitrosocysteine is present on cysteine 144. At serine 255 the chain carries Phosphoserine. In terms of domain architecture, B30.2/SPRY spans 271–475 (DFKFQVWRKM…PLLLVGPEGA (205 aa)).

It belongs to the TRIM/RBCC family. As to quaternary structure, homodimer. Homooligomer; disulfide-linked. Oligomerizes on the phospholipid membrane. Interacts with DYSF and CAV3. Disulfide bond formation at Cys-242 occurs in case of membrane damage that cause the entry of the oxidized milieu of the extracellular space, resulting in homooligomerization. In terms of processing, S-nitrosylation at Cys-144 stabilizes TRIM72 and protects against oxidation-induced protein degradation and cell death.

Its subcellular location is the cell membrane. It localises to the sarcolemma. The protein localises to the cytoplasmic vesicle membrane. It carries out the reaction S-ubiquitinyl-[E2 ubiquitin-conjugating enzyme]-L-cysteine + [acceptor protein]-L-lysine = [E2 ubiquitin-conjugating enzyme]-L-cysteine + N(6)-ubiquitinyl-[acceptor protein]-L-lysine.. It functions in the pathway protein modification; protein ubiquitination. With respect to regulation, specifically binds phosphatidylserine. The binding to phospholipids enhances ubiquitination activity. Its function is as follows. Muscle-specific E3 ubiquitin-protein ligase that plays a central role in cell membrane repair by nucleating the assembly of the repair machinery at injury sites. Its ubiquitination activity is mediated by E2 ubiquitin-conjugating enzymes UBE2D1, UBE2D2 and UBE2D3. Acts as a sensor of oxidation: upon membrane damage, entry of extracellular oxidative environment results in disulfide bond formation and homooligomerization at the injury site. This oligomerization acts as a nucleation site for recruitment of TRIM72-containing vesicles to the injury site, leading to membrane patch formation. Probably acts upstream of the Ca(2+)-dependent membrane resealing process. Required for transport of DYSF to sites of cell injury during repair patch formation. Regulates membrane budding and exocytosis. May be involved in the regulation of the mobility of KCNB1-containing endocytic vesicles. This Homo sapiens (Human) protein is Tripartite motif-containing protein 72.